The chain runs to 275 residues: NAD(P)H-hydrate epimerase (275 aa).

Residues 49–258 enclose the YjeF N-terminal domain; that stretch reads AIKIDQELFS…ALAAKYELNL (210 aa). 102-106 serves as a coordination point for (6S)-NADPHX; it reads NNGGD. K(+) is bound by residues asparagine 103 and aspartate 167. (6S)-NADPHX is bound by residues 171–177 and aspartate 200; that span reads GFSFKPP. Position 203 (serine 203) interacts with K(+).

Belongs to the NnrE/AIBP family. The cofactor is K(+).

It catalyses the reaction (6R)-NADHX = (6S)-NADHX. The catalysed reaction is (6R)-NADPHX = (6S)-NADPHX. Its function is as follows. Catalyzes the epimerization of the S- and R-forms of NAD(P)HX, a damaged form of NAD(P)H that is a result of enzymatic or heat-dependent hydration. This is a prerequisite for the S-specific NAD(P)H-hydrate dehydratase to allow the repair of both epimers of NAD(P)HX. This chain is NAD(P)H-hydrate epimerase, found in Ixodes scapularis (Black-legged tick).